The following is a 250-amino-acid chain: Anti-sigma-L factor RslA (250 aa).

The Cytoplasmic segment spans residues Met-1–Leu-115. Residues Ile-116 to Val-136 traverse the membrane as a helical segment. Topologically, residues Gln-137–Leu-250 are extracellular.

Interacts with ECF RNA polymerase sigma factor SigL; this should inhibit the interaction of SigL with the RNA polymerase catalytic core. In terms of processing, probably cleaved within the membrane by Rip1 near the cytoplasmic membrane interface.

Its subcellular location is the cell membrane. In terms of biological role, an anti-sigma factor for extracytoplasmic function (ECF) sigma factor SigL. ECF sigma factors are held in an inactive form by an anti-sigma factor until released by regulated intramembrane proteolysis (RIP). RIP occurs when an extracytoplasmic signal triggers a concerted proteolytic cascade to transmit information and elicit cellular responses. The membrane-spanning regulatory substrate protein is first cut extracytoplasmically (site-1 protease, S1P), then within the membrane itself (site-2 protease, S2P, Rip1), while cytoplasmic proteases finish degrading the regulatory protein, liberating the sigma factor. The chain is Anti-sigma-L factor RslA (rslA) from Mycobacterium tuberculosis (strain ATCC 35801 / TMC 107 / Erdman).